The following is a 936-amino-acid chain: Lipoxygenase 2.1, chloroplastic (936 aa).

Residues M1 to V69 form a disordered region. Low complexity predominate over residues S47–T59. A PLAT domain is found at M88–P217. The 717-residue stretch at S220–I936 folds into the Lipoxygenase domain. A disordered region spans residues L264–H308. Residues P287–S297 show a composition bias toward basic residues. Residues K298–H308 show a composition bias toward basic and acidic residues. Residues H587, H592, H777, N781, and I936 each coordinate Fe cation.

This sequence belongs to the lipoxygenase family. Fe cation is required as a cofactor. The N-terminus is blocked.

It is found in the plastid. The protein localises to the chloroplast. The enzyme catalyses (9Z,12Z)-octadecadienoate + O2 = (13S)-hydroperoxy-(9Z,11E)-octadecadienoate. It catalyses the reaction (9Z,12Z,15Z)-octadecatrienoate + O2 = (13S)-hydroperoxy-(9Z,11E,15Z)-octadecatrienoate. Its pathway is lipid metabolism; oxylipin biosynthesis. Functionally, plant lipoxygenase may be involved in a number of diverse aspects of plant physiology including growth and development, pest resistance, and senescence or responses to wounding. This enzyme is possibly involved in jasmonic acid synthesis. It exhibits linoleate 13-lipoxygenase and arachidonate 15-lipoxygenase activity. The chain is Lipoxygenase 2.1, chloroplastic (LOX2.1) from Hordeum vulgare (Barley).